Here is a 574-residue protein sequence, read N- to C-terminus: Membrane protein insertase YidC (574 aa).

Residues 6 to 26 (VFLIFAWLMVAALLWMEWGKD) form a helical membrane-spanning segment. The segment at 45–77 (RDPDAAAPSAANVPSAQPIPQAGAPGTVPATSS) is disordered. Transmembrane regions (helical) follow at residues 356–376 (FSIM…LHSF), 380–400 (WGWA…PLSA), 447–467 (GGCL…WVLV), 489–509 (PYFI…KLTP), and 525–545 (PLVF…YWVV).

Belongs to the OXA1/ALB3/YidC family. Type 1 subfamily. As to quaternary structure, interacts with the Sec translocase complex via SecD. Specifically interacts with transmembrane segments of nascent integral membrane proteins during membrane integration.

It is found in the cell inner membrane. Functionally, required for the insertion and/or proper folding and/or complex formation of integral membrane proteins into the membrane. Involved in integration of membrane proteins that insert both dependently and independently of the Sec translocase complex, as well as at least some lipoproteins. Aids folding of multispanning membrane proteins. This is Membrane protein insertase YidC from Xanthomonas euvesicatoria pv. vesicatoria (strain 85-10) (Xanthomonas campestris pv. vesicatoria).